Here is a 500-residue protein sequence, read N- to C-terminus: Probable trehalose-phosphate phosphatase 8 (500 aa).

Belongs to the trehalose phosphatase family. A divalent metal cation is required as a cofactor.

It catalyses the reaction alpha,alpha-trehalose 6-phosphate + H2O = alpha,alpha-trehalose + phosphate. It functions in the pathway glycan biosynthesis; trehalose biosynthesis. In terms of biological role, removes the phosphate from trehalose 6-phosphate to produce free trehalose. Trehalose accumulation in plant may improve abiotic stress tolerance. The protein is Probable trehalose-phosphate phosphatase 8 (TPP8) of Oryza sativa subsp. japonica (Rice).